Reading from the N-terminus, the 917-residue chain is MELSSAEAVSTRFLGLTQRSVSEDLGCRRGEFSRKHYGSVELLISSDADGAIQRAGRFRVENGSSDENTGYTPGTWHRTDVHLENPEYYTRWYFKYFLGKVHQNYIGTDSEKNPFFLSVVLSDQNNQRVPQYHSILWRKTGTQKICLPYSPTKTLSVKSILSAMSLEKFEKGPREIFHPDIQKDLLVLEEQEGSVNFKFGVLYAKDGQLTDDEMFSNETGSESFQRFLHLLGDTITLKGWTGYRGGLDTKNDTTGTFSIYTVYQGHEIMFHVSTMLPYSRENKQQVERKRHIGNDIVTIVFQEGEETAPAFKPSMIRSHFTHIFALVRYNKQNDSYRLKIFSEESVPLFGPPLPSPPVFTNHQEFRDFVLVKLINGEKATLETPTFSQKRQRTLDMLIRSLYQDLMPDLHKNMLNRRSFSDVLPDSPKSTRKKEEARQAEFVRLGQALKLKTGVKGDAPTTLATTSFCKKEPWESQSFCSNFPHEVVCADSWGQSLLVSTDAGILLIDDGQTTVQVFDKTLQIKQMHVLEALDYLIARTDKGKDSRLLVFRLSSVQKDIETKQVIRSKYDCRENKLERTKGCHLYAINTHHSSELRIVVAIRNKLLLITKKYNPCNSLTGSSLSLSESPVEEFQYIREICLSDPPVVMTLVDGPTGDSDNMICVAYRHQFDLVNESTGESYRLHHIEANKVNFVAAIDVYEDGEAGLLLCYNYVCQYRKVYPFNGGSPLIQPSAYDFHFSWNQVPYAVVCAFPYILAFTTDSIEIRLVVNGNLVHTAVVPELQLVASRSDIYFKATAAVSGSSHSSSKEMSSRSSPQTPTAYDMLECSLSSSEGEVACKNLYKIPLSNLVGRSIERPLKSPLTPKVVTTPTSSGITSLPVTHSPSLSRMEIKEIANRTRKELLGKLPLFFSVYISYH.

A Rap-GAP domain is found at 185–401; sequence LLVLEEQEGS…RTLDMLIRSL (217 aa). The 310-residue stretch at 483-792 folds into the CNH domain; sequence PHEVVCADSW…QLVASRSDIY (310 aa).

The protein belongs to the GARNL3 family.

This is GTPase-activating Rap/Ran-GAP domain-like protein 3 (GARNL3) from Gallus gallus (Chicken).